A 427-amino-acid chain; its full sequence is BRO1 domain-containing protein BROX homolog (427 aa).

One can recognise a BRO1 domain in the interval methionine 1–alanine 427.

Belongs to the BROX family.

This Caenorhabditis elegans protein is BRO1 domain-containing protein BROX homolog.